Consider the following 371-residue polypeptide: MAGKRDYYEILGVEKGADQDTIKKAYRKLAMQFHPDKNPGNKEAEEKFKEAAGAYEVLSDAQKRAQYDRFGHDAFTRGGGGGGFTDAEDIFSHFGDIFGDFFGGGMGGQQRQRRNRNEPRRGSDLRYVTEITLKDVITGIEKEIEFDTDKNCDECKGTGAEKGSQVSTCGTCGGSGQVVRQQGFFAMASTCPTCHGQGTVIKNPCKPCKGKGRVAEHRKIRLNIPAGVDTGTRLRVATEGEGGYMGGPPGDLYVEIRVKQHNNFERRNEDLFAELSLPYVQMLLGAEIEVPTVTGKAKLEVPKGTHHGDNVKLVGEGLPSLRGNRRGDIYFTVNVQFPEKLHKDEEKLLREIAKARGLNVTSEGGFFGKKK.

The 66-residue stretch at 6–71 (DYYEILGVEK…QKRAQYDRFG (66 aa)) folds into the J domain. The disordered stretch occupies residues 104-123 (GGMGGQQRQRRNRNEPRRGS). A CR-type zinc finger spans residues 139–217 (GIEKEIEFDT…CKGKGRVAEH (79 aa)). 8 residues coordinate Zn(2+): Cys-152, Cys-155, Cys-169, Cys-172, Cys-191, Cys-194, Cys-205, and Cys-208. CXXCXGXG motif repeat units follow at residues 152-159 (CDECKGTG), 169-176 (CGTCGGSG), 191-198 (CPTCHGQG), and 205-212 (CKPCKGKG).

Belongs to the DnaJ family. Homodimer. The cofactor is Zn(2+).

The protein resides in the cytoplasm. In terms of biological role, participates actively in the response to hyperosmotic and heat shock by preventing the aggregation of stress-denatured proteins and by disaggregating proteins, also in an autonomous, DnaK-independent fashion. Unfolded proteins bind initially to DnaJ; upon interaction with the DnaJ-bound protein, DnaK hydrolyzes its bound ATP, resulting in the formation of a stable complex. GrpE releases ADP from DnaK; ATP binding to DnaK triggers the release of the substrate protein, thus completing the reaction cycle. Several rounds of ATP-dependent interactions between DnaJ, DnaK and GrpE are required for fully efficient folding. Also involved, together with DnaK and GrpE, in the DNA replication of plasmids through activation of initiation proteins. This is Chaperone protein DnaJ from Bdellovibrio bacteriovorus (strain ATCC 15356 / DSM 50701 / NCIMB 9529 / HD100).